A 190-amino-acid polypeptide reads, in one-letter code: Nucleoside triphosphate pyrophosphatase (190 aa).

The active-site Proton acceptor is Asp-69.

Belongs to the Maf family. Requires a divalent metal cation as cofactor.

It localises to the cytoplasm. The enzyme catalyses a ribonucleoside 5'-triphosphate + H2O = a ribonucleoside 5'-phosphate + diphosphate + H(+). It catalyses the reaction a 2'-deoxyribonucleoside 5'-triphosphate + H2O = a 2'-deoxyribonucleoside 5'-phosphate + diphosphate + H(+). Functionally, nucleoside triphosphate pyrophosphatase. May have a dual role in cell division arrest and in preventing the incorporation of modified nucleotides into cellular nucleic acids. This Helicobacter pylori (strain ATCC 700392 / 26695) (Campylobacter pylori) protein is Nucleoside triphosphate pyrophosphatase.